Here is a 239-residue protein sequence, read N- to C-terminus: Ribosomal RNA small subunit methyltransferase G (239 aa).

S-adenosyl-L-methionine-binding positions include G78, F83, 129 to 130 (AE), and R148.

The protein belongs to the methyltransferase superfamily. RNA methyltransferase RsmG family.

The protein localises to the cytoplasm. Specifically methylates the N7 position of a guanine in 16S rRNA. In Clostridium botulinum (strain ATCC 19397 / Type A), this protein is Ribosomal RNA small subunit methyltransferase G.